The chain runs to 940 residues: Isoleucine--tRNA ligase (940 aa).

A 'HIGH' region motif is present at residues 58 to 68 (PYANGSIHIGH). An L-isoleucyl-5'-AMP-binding site is contributed by glutamate 563. Residues 604–608 (KMSKS) carry the 'KMSKS' region motif. Lysine 607 serves as a coordination point for ATP. Residues cysteine 902, cysteine 905, cysteine 922, and cysteine 925 each contribute to the Zn(2+) site.

Belongs to the class-I aminoacyl-tRNA synthetase family. IleS type 1 subfamily. As to quaternary structure, monomer. Requires Zn(2+) as cofactor.

It localises to the cytoplasm. The enzyme catalyses tRNA(Ile) + L-isoleucine + ATP = L-isoleucyl-tRNA(Ile) + AMP + diphosphate. Functionally, catalyzes the attachment of isoleucine to tRNA(Ile). As IleRS can inadvertently accommodate and process structurally similar amino acids such as valine, to avoid such errors it has two additional distinct tRNA(Ile)-dependent editing activities. One activity is designated as 'pretransfer' editing and involves the hydrolysis of activated Val-AMP. The other activity is designated 'posttransfer' editing and involves deacylation of mischarged Val-tRNA(Ile). The protein is Isoleucine--tRNA ligase of Marinomonas sp. (strain MWYL1).